The sequence spans 745 residues: F-box only protein 30 (745 aa).

The TRAF-type zinc-finger motif lies at 48-109 (EHRLLCPFER…SYADRKSYEN (62 aa)). Disordered regions lie at residues 211–231 (NTSV…LEDQ) and 305–324 (GDSK…SDGT). Basic and acidic residues predominate over residues 222–231 (QNARESLEDQ). A compositionally biased stretch (polar residues) spans 305–314 (GDSKQSNLTN). An F-box domain is found at 610-658 (NDHLSSLPFEVLQHIAGFLDGFSLCQLSCVSKLMRDVCGSLLQSRGMVI).

In terms of assembly, part of a SCF (SKP1-cullin-F-box) protein ligase complex. Interacts with SKP1, CUL1 and RBX1/ROC1. In terms of processing, auto-ubiquitinated. Post-translationally, may be neddylated. Neddylation may be required for E3 ligase activity.

It participates in protein modification; protein ubiquitination. Substrate-recognition component of the SCF (SKP1-CUL1-F-box protein)-type E3 ubiquitin ligase complex. Required for muscle atrophy following denervation. This chain is F-box only protein 30 (FBXO30), found in Homo sapiens (Human).